A 594-amino-acid chain; its full sequence is (E)-beta-ocimene synthase TPS6FN (594 aa).

Arginine 303, aspartate 340, aspartate 344, arginine 489, and asparagine 492 together coordinate (2E)-geranyl diphosphate. Residues aspartate 340 and aspartate 344 each coordinate Mg(2+). The DDXXD motif signature appears at 340–344; that stretch reads DDIYD. Mg(2+) contacts are provided by asparagine 492, threonine 496, and glutamate 500.

The protein belongs to the terpene synthase family. Tpsb subfamily. Requires Mg(2+) as cofactor. Mn(2+) is required as a cofactor. In terms of tissue distribution, expressed in glandular trichomes two to four weeks after flowering onset.

The enzyme catalyses (2E)-geranyl diphosphate = (E)-beta-ocimene + diphosphate. It catalyses the reaction (2E)-geranyl diphosphate = (Z)-beta-ocimene + diphosphate. It participates in secondary metabolite biosynthesis; terpenoid biosynthesis. Involved in monoterpene (C10) olefins biosynthesis, constituants of cannabinoids and terpenoids-rich resins. Catalyzes mainly the conversion of (2E)-geranyl diphosphate to (E)-beta-ocimene, and also produces minor products such as (Z)-beta-ocimene. In Cannabis sativa (Hemp), this protein is (E)-beta-ocimene synthase TPS6FN.